Reading from the N-terminus, the 106-residue chain is Large ribosomal subunit protein P1A (106 aa).

Residues 74 to 106 (AGGGAAAEEAAEEEKEEEAKEESDDDMGFGLFD) form a disordered region. Residues 82 to 100 (EAAEEEKEEEAKEESDDDM) are compositionally biased toward acidic residues.

This sequence belongs to the eukaryotic ribosomal protein P1/P2 family. As to quaternary structure, component of the large ribosomal subunit (LSU). Mature ribosomes consist of a small (40S) and a large (60S) subunit. The 40S subunit contains about 32 different proteins and 1 molecule of RNA (18S). The 60S subunit contains 45 different proteins and 3 molecules of RNA (25S, 5.8S and 5S). The 5 acidic ribosomal P-proteins form the stalk structure of the 60S subunit. They are organized as a pentameric complex in which uL10/P0 interacts with 2 heterodimers, P1A-P2B and P1B-P2A. Phosphorylated.

It localises to the cytoplasm. Functionally, component of the ribosome, a large ribonucleoprotein complex responsible for the synthesis of proteins in the cell. The small ribosomal subunit (SSU) binds messenger RNAs (mRNAs) and translates the encoded message by selecting cognate aminoacyl-transfer RNA (tRNA) molecules. The large subunit (LSU) contains the ribosomal catalytic site termed the peptidyl transferase center (PTC), which catalyzes the formation of peptide bonds, thereby polymerizing the amino acids delivered by tRNAs into a polypeptide chain. The nascent polypeptides leave the ribosome through a tunnel in the LSU and interact with protein factors that function in enzymatic processing, targeting, and the membrane insertion of nascent chains at the exit of the ribosomal tunnel. The protein is Large ribosomal subunit protein P1A (RPP1A) of Candida albicans (strain SC5314 / ATCC MYA-2876) (Yeast).